We begin with the raw amino-acid sequence, 669 residues long: DNA ligase (669 aa).

NAD(+)-binding positions include 34–38 (DAEYD), 83–84 (SL), and E114. The N6-AMP-lysine intermediate role is filled by K116. Residues R137, E171, K287, and K311 each contribute to the NAD(+) site. The Zn(2+) site is built by C405, C408, C423, and C428. Residues 591-669 (NVESYFAGKT…EERFLQELNK (79 aa)) form the BRCT domain.

It belongs to the NAD-dependent DNA ligase family. LigA subfamily. It depends on Mg(2+) as a cofactor. Mn(2+) serves as cofactor.

It catalyses the reaction NAD(+) + (deoxyribonucleotide)n-3'-hydroxyl + 5'-phospho-(deoxyribonucleotide)m = (deoxyribonucleotide)n+m + AMP + beta-nicotinamide D-nucleotide.. Its function is as follows. DNA ligase that catalyzes the formation of phosphodiester linkages between 5'-phosphoryl and 3'-hydroxyl groups in double-stranded DNA using NAD as a coenzyme and as the energy source for the reaction. It is essential for DNA replication and repair of damaged DNA. The sequence is that of DNA ligase from Bacillus cereus (strain ZK / E33L).